The primary structure comprises 428 residues: MAATIFLTMIVLLLLGFPMMIPLIAGAFIGFLMLFGDLARTETMVQQMLAGIRPASLIAVPMFIFAADIMTRGQSAGRLINVVMAYVGHIRGGLAISTAAACTMFGAVSGSTQATVVAIGSPLRPRMLKAGYKDSFVLALIVNASDIAFLIPPSIGMIIYGVVSSTSIAELFIAGIGPGLLILVLFSAYAYIYAVRNDVPTEPRASWAERARTMRQALWPMGFPVIIIGGIYGGVFSPTEAAAACVLYALVLEVLVFRSMSLADVYDTAKSTGLITAIVFILVGAGAAFSWVISFAQVPQQILGAIGIAEMGPIGVLFVISIAFFIGCMFVDPIVVILVLVPVFAPVVKSVGLDPVLVGTIITLQVAIGSATPPFGCDIFTAIAVFKRPYAEVVRGTPPFILMLLGVSVALIFFPQIALFLRDLAFSK.

The next 12 helical transmembrane spans lie at 9–29 (MIVL…GAFI), 49–69 (LAGI…AADI), 99–119 (AAAC…VVAI), 139–159 (ALIV…GMII), 172–192 (FIAG…YAYI), 217–237 (ALWP…GVFS), 242–262 (AAAC…SMSL), 273–293 (GLIT…SWVI), 302–322 (ILGA…VISI), 324–344 (FFIG…VPVF), 366–386 (VAIG…IAVF), and 400–420 (FILM…IALF).

Belongs to the TRAP transporter large permease family. In terms of assembly, the complex comprises the extracytoplasmic solute receptor protein UehA, and the two transmembrane proteins UehB and UehC.

It is found in the cell inner membrane. Its function is as follows. Part of the tripartite ATP-independent periplasmic (TRAP) transport system UehABC, which imports both ectoine and 5-hydroxyectoine as nutrients, and not as osmoprotectants. In Ruegeria pomeroyi (strain ATCC 700808 / DSM 15171 / DSS-3) (Silicibacter pomeroyi), this protein is Ectoine/5-hydroxyectoine TRAP transporter large permease protein UehC.